A 99-amino-acid chain; its full sequence is MCGRPGDDGDMRSAVDVTVTGRVQGVSFRYYADREADRLGVAGWVRNEPDGTVAAHVEGDPGAVAAFVRWCHDGPRLAHVEQVDVRDGTDQGLRSFGVR.

Positions 14–99 (AVDVTVTGRV…DQGLRSFGVR (86 aa)) constitute an Acylphosphatase-like domain. Residues arginine 29 and asparagine 47 contribute to the active site.

It belongs to the acylphosphatase family.

It catalyses the reaction an acyl phosphate + H2O = a carboxylate + phosphate + H(+). The polypeptide is Acylphosphatase (acyP) (Nocardioides sp. (strain ATCC BAA-499 / JS614)).